Reading from the N-terminus, the 645-residue chain is Acetyl-coenzyme A synthetase (645 aa).

Residues 190–193 (RGGR) and T308 each bind CoA. Residues 384–386 (GEP), 408–413 (DTWWQT), D497, and R512 contribute to the ATP site. Position 520 (S520) interacts with CoA. R523 lines the ATP pocket. Residues V534, H536, and V539 each coordinate Mg(2+). N6-acetyllysine is present on K606.

This sequence belongs to the ATP-dependent AMP-binding enzyme family. The cofactor is Mg(2+). Acetylated. Deacetylation by the SIR2-homolog deacetylase activates the enzyme.

The enzyme catalyses acetate + ATP + CoA = acetyl-CoA + AMP + diphosphate. Catalyzes the conversion of acetate into acetyl-CoA (AcCoA), an essential intermediate at the junction of anabolic and catabolic pathways. AcsA undergoes a two-step reaction. In the first half reaction, AcsA combines acetate with ATP to form acetyl-adenylate (AcAMP) intermediate. In the second half reaction, it can then transfer the acetyl group from AcAMP to the sulfhydryl group of CoA, forming the product AcCoA. In Halorhodospira halophila (strain DSM 244 / SL1) (Ectothiorhodospira halophila (strain DSM 244 / SL1)), this protein is Acetyl-coenzyme A synthetase.